The chain runs to 2851 residues: MSHNKPVNEPIVIIGSGCRFAGGANSPSKLWDLLRNPKDLRSDVTSRFNSQGYYHKDGTHHGHMNVLQSYLIGEDTRLFDAEFFGVNPVEAKAMDPQQRLLLEVVYEAIESAGLSMERMRGSDTAVFAGLMCGDYEAMMLRDLDQAPTHFAIGTSRAILSNRVSYFFDWHGPSITIDTACSSSLVAVHHAVQALRSGDSHAAIACGSNLILGPEMYVIESKLKMLSPDGLSRMWDKDANGYARGEGVTAVVLKTLSQALADNDRIEAVIRETGVNQDGATPGITMPSASAQRALIHSVYRKAGLDPESPNDRPQYIESHGTGTPAGGSIKTVLGHTEGSAGIAALLKVTKAIQNATVPPNLWFQQLNHKLEPFYGNIQIPTQPVTWPATEKRRRKRASINNFGFGGTNAHAIVEGYEPKEEIPPPSFHHVDATVSTPFVFSAASKESLRANLAAYALHLDAHPQISTRDLAYTLRERRSVLPFRIAFPESNTKDLKLSIAARLSESDGEGLGVRTWAANNGGSSKLLGIFTGQGAQYARMGTELLAQTNMARKTLEELEGYLAELPEEDRPSWSLQSELLADPSVSRVGEAAISQPLCTAVQIILVKLLCSAKVRFDTVIGHSSGEIAAAYAAGYLSARDALLVAYYRGLHCKLAASPNGNVKGAMLAAGTSLEDATELCEDEEFSGRINVAASNSSSSVTISGDEDAIDELATVFDDEKKFNRRLKVDTAYHSKHMLPCFEPYVASLRRVGITVLPGNDQCTWISSVHEGRAINPATDELADVYWAQNMTKPVLFSQAVQAAVAPVRGGEPFAAALEVGPHAALAGPAKQTIQEVAQKEIPYHGSLVRGENATKAFATCLGFLWERLDAASLDLGSCEAALSSSGGVQQYTVLADLPTYQWKHETVYWAESRRSRRMRLREGPFHQLLGNVSPDSAPHILRWKNVLKPKEMTWLEGHQVQNQVVLPAATYICTAIEAARSLAQGKNIQLIELSNFCIHNAITFDQNDVGVEVLVELSRINVKENHVNATFTYTAGLGDETNDLALAANGELNILLVDDDPSLALFPERQEPPPHMIPVQPSRLYDFMKGLEYDFSGPFQSLAKLERKLGTATCLAKKARKSVPDADDLLVHPVDLDAAFQSVMLAYSYPGDDQLRLLHLPTSIERLRVNPAALSSQKYVENDTTILDSTCTTADRAEPGNGFSGSVNMYAAGFDHAAIQVEQVKFKPVGSDAKDDRNVFYKMHWVPSKPDGLLAAASVPITERDRKLMFVLSRIAAYYLRKFDEMIAEDDPARLESPLCHYMRYARHMMGLLRAGEHKWAYKEWLQDTEQDVFDDIASKGFQDNSDVRIMLLVGSTMPRVFRRETTMLEHFRTSGLLDEYYSNGFGTKQCTLWVAGVLKQLADCNPHLNLLEIGAGTGSATKTILKSVGHDFASYTFTDISSSFFENAAETFSDYGSRMVFKVCNAENDPVEQGFEAGTYDVVIAFMVIHACAKLDEAVANLRKLLKPGGLLVLGEGASDGAMQAGAGFIFGTLPGWWRGVDEGRTLSPLVSASEWQVILRDAGFSGIDTMSPPELFDAFGITLFVSTAVDERIEFVRNPRAKASRAVYNKVVVIGGITSTIAKLAEEIQTVLTPLAIQVLLCTSLEDLQENVLDDETVIISLVDLEAPVFKDITSERWYKFRLLFETKREILWLTSGRLEDEPYSNMTVGFGRSAMHEEETLRVQYLDVADVSQLNAVMVMQYLLRFTSSELDKSDILYTKEPEVIIDANGRELVPRLFTIQAANNRLNSVTRPIYEDVDTSQSVVELRYAKEEPSFRKLSRYEVSAKLEPSHDTTIKLRVAYSVISALRCPAGYQYLIMGFDESGARRVALVNSLTSVLCVPLKSTILCELYDMSEPSYLTLLAAEIIAMTIVDPLFTGQKLAILNASKLIIQAIASYATAKGVETTFIVDAGGEFVPKDVAVQSHLPLYPSRSDMSFILPTNLACFVSFSALNKADSEDAMKSLLPFYCQKMNTSTLFSTHGVDTGALGATAQHVLSRAISSRKGRVIDWTPPSTSLSVRITRFEMTQLFKADKTYWLVGLSGALGISLCDWMIERGVKYLVLTSRNPKIDERWIENHEKHGVMIKILLCDVTDEAAIKDVHQTIVRTLPPIAGLLNGAMVLRDVSVRNMEYAQVTDVIRPKVLGSIHLDRIFHDIDLDFFVLLSSINCVIGNVGQANYAAANMGMIGVAGHRRKRGLRSSVVNVGAIIGVGYITQSDRQLDVTVAKTAMMHLSEQDFHQIFAECMEAGHLDNDSGPEISTGLLEITPDTIDIPPWYSDPKFKRFQVHQAAAGAGKAEVANSASTQELLLACRSQADITKVVQQAYCAQLRRILQVSTADEDLMMMRGVDLGFDSLLSVDVRSWFLKNFRVSIPVLKIMANDVRMSTLVDLAAESIPAELIPHVQQQQQQAGRQDASSNTSSDDETASTLPTSPESASPGTSTPVPEKDISPVDTFNSVDWYFETTPPSISTFSELTSAPAPRSDPKVVVLTGCSGLLGHHLLSTLIAQPSIRKIICLAVRSLPSRLSSGELPLPGDKIEYHAGDLTAPQLGLSTSTWISIFKQADAVIHNGSDTSHLKYYSALKLANVDSTKQLVSTCLQRMIPFHYVSSAGVALFAERDAFPPVSCTTTGKTPPADGSHGYMCGKWVCEKMLERVYEQYHLPIVIQRPSTIIRSGEDAAVERAGFDWVNSLLHFAHQTQTVPRVDHNAGAFDLVSVDTCCSDVARKLTRATKERITYVNNVGDVVIPMASMADVGLDRIGKRYNVLTMDEWTKTVVEAGMHPAVAALIETFDEPGVEKYPMLLRE.

The 408-residue stretch at 8–415 (NEPIVIIGSG…GTNAHAIVEG (408 aa)) folds into the Ketosynthase family 3 (KS3) domain. Residues 304–324 (LDPESPNDRPQYIESHGTGTP) form a disordered region. The segment at 529–851 (IFTGQGAQYA…PYHGSLVRGE (323 aa)) is acyl transferase (AT) domain. Residues 926-1059 (HQLLGNVSPD…GELNILLVDD (134 aa)) form an N-terminal hotdog fold region. In terms of domain architecture, PKS/mFAS DH spans 926–1235 (HQLLGNVSPD…FKPVGSDAKD (310 aa)). Residues 949–1242 (PKEMTWLEGH…AKDDRNVFYK (294 aa)) form a dehydratase (DH) domain region. His-958 (proton acceptor; for dehydratase activity) is an active-site residue. The segment at 1076–1235 (MIPVQPSRLY…FKPVGSDAKD (160 aa)) is C-terminal hotdog fold. The active-site Proton donor; for dehydratase activity is the Asp-1137. A methyltransferase (MT) domain region spans residues 1390-1577 (QCTLWVAGVL…GIDTMSPPEL (188 aa)). The interval 2079 to 2252 (TYWLVGLSGA…RSSVVNVGAI (174 aa)) is ketoreductase (KR)domain. Positions 2360–2443 (ADITKVVQQA…DLAAESIPAE (84 aa)) constitute a Carrier domain. O-(pantetheine 4'-phosphoryl)serine is present on Ser-2399. The disordered stretch occupies residues 2447–2496 (HVQQQQQQAGRQDASSNTSSDDETASTLPTSPESASPGTSTPVPEKDISP). Positions 2455-2488 (AGRQDASSNTSSDDETASTLPTSPESASPGTSTP) are enriched in polar residues. The tract at residues 2535–2767 (LTGCSGLLGH…DLVSVDTCCS (233 aa)) is reductase (R) domain.

It depends on pantetheine 4'-phosphate as a cofactor.

It carries out the reaction 7 malonyl-CoA + acetyl-CoA + 10 AH2 + 5 S-adenosyl-L-methionine + 2 H(+) = dehydroprobetaenone I + 10 A + 5 S-adenosyl-L-homocysteine + 7 CO2 + 8 CoA + 6 H2O. It participates in mycotoxin biosynthesis. Its function is as follows. Highly reducing polyketide synthase; part of the gene cluster that mediates the biosynthesis of the phytotoxin stemphyloxin II. The first step of the pathway is the synthesis of dehydroprobetaenone I by the polyketide synthase sthA and the enoyl reductase sthE via condensation of one acetyl-CoA starter unit with 7 malonyl-CoA units and 5 methylations. The C-terminal reductase (R) domain of sthA catalyzes the reductive release of the polyketide chain. Because sthA lacks a designated enoylreductase (ER) domain, the required activity is provided the enoyl reductase sthE. The short-chain dehydrogenase/reductase sthC then catalyzes reduction of dehydroprobetaenone I to probetaenone I. The cytochrome P450 monooxygenase sthF catalyzes successive epoxidation, oxidation (resulting from epoxide opening) and hydroxylation to install a tertiary alcohol in the decaline ring to yield betaenone C from dehydroprobetaenone I and betaenone B from probetaenone I. The FAD-linked oxidoreductase sthB is responsible for the conversion of betaenone C to betaenone A via an intramolecular aldol reaction between C-1 and C-17 to form the bridged tricyclic system in betaenone A. Finally, the cytochrome P450 monooxygenase sthD catalyzes the hydroxylation of C-15 to afford the final metabolite stemphyloxin II. This Phaeosphaeria nodorum (strain SN15 / ATCC MYA-4574 / FGSC 10173) (Glume blotch fungus) protein is Highly reducing polyketide synthase sthA.